Consider the following 221-residue polypeptide: Translation initiation factor 6 (221 aa).

It belongs to the eIF-6 family.

Its function is as follows. Binds to the 50S ribosomal subunit and prevents its association with the 30S ribosomal subunit to form the 70S initiation complex. This Natronomonas pharaonis (strain ATCC 35678 / DSM 2160 / CIP 103997 / JCM 8858 / NBRC 14720 / NCIMB 2260 / Gabara) (Halobacterium pharaonis) protein is Translation initiation factor 6.